The following is a 555-amino-acid chain: Glutamine--tRNA ligase (555 aa).

The 'HIGH' region motif lies at 34–44 (PEPNGYLHIGH). ATP is bound by residues 35 to 37 (EPN) and 41 to 47 (HIGHAKS). L-glutamine contacts are provided by aspartate 67 and tyrosine 212. ATP is bound by residues threonine 231, 261 to 262 (RL), and 269 to 271 (MSK). The short motif at 268–272 (IMSKR) is the 'KMSKS' region element.

This sequence belongs to the class-I aminoacyl-tRNA synthetase family. Monomer.

It localises to the cytoplasm. The catalysed reaction is tRNA(Gln) + L-glutamine + ATP = L-glutaminyl-tRNA(Gln) + AMP + diphosphate. The protein is Glutamine--tRNA ligase of Yersinia enterocolitica serotype O:8 / biotype 1B (strain NCTC 13174 / 8081).